The chain runs to 869 residues: Leucine--tRNA ligase (869 aa).

The 'HIGH' region signature appears at 51–61 (PYPSGRIHMGH). Residues 636 to 640 (KMSKS) carry the 'KMSKS' region motif. Residue lysine 639 coordinates ATP.

This sequence belongs to the class-I aminoacyl-tRNA synthetase family.

The protein resides in the cytoplasm. The catalysed reaction is tRNA(Leu) + L-leucine + ATP = L-leucyl-tRNA(Leu) + AMP + diphosphate. The chain is Leucine--tRNA ligase from Dinoroseobacter shibae (strain DSM 16493 / NCIMB 14021 / DFL 12).